Consider the following 359-residue polypeptide: Alpha-N-acetylneuraminide alpha-2,8-sialyltransferase (359 aa).

Residues 1–28 (MWGRWRGAGGRRGVAQPVIPQMKLLGGR) are Cytoplasmic-facing. Residues 29–49 (VPLGASALGLLIVCWFYIFPG) form a helical; Signal-anchor for type II membrane protein membrane-spanning segment. The Lumenal segment spans residues 50-359 (GERLPGHKEM…KKDVSSKKPH (310 aa)). N-linked (GlcNAc...) asparagine glycans are attached at residues Asn-73 and Asn-121. Cystine bridges form between Cys-140/Cys-289 and Cys-154/Cys-349. Residues Asn-145 and Asn-168 each coordinate CMP-N-acetyl-beta-neuraminate. Asn-247 is a glycosylation site (N-linked (GlcNAc...) asparagine). CMP-N-acetyl-beta-neuraminate contacts are provided by Ser-276, Thr-277, Gly-278, Trp-298, and His-312. His-324 functions as the Proton donor/acceptor in the catalytic mechanism.

It belongs to the glycosyltransferase 29 family. As to expression, expressed in the dorsal blastopore lip and in the presumptive neuroectoderm in stage 11 embryos. During gastrulation, strongly expressed in the involuting mesoderm. At stages 13 and 16, expressed in the neural plate and neural fold, paraxial mesoderm and notochord. At stages 19 and 22 (neural tube and early tailbud), strongly expressed in the neural tube and notochord. At the tadpole stage, expressed in the head region, branchial arches and otic and optic primordia. Also localized in the notochord and weakly expressed in the somites. In adults, expressed in the brain and ovary. Isoform 2 (short) is expressed at a low level in the adult testis and muscle, and at a high level in the skin. Isoform 1 (long) is expressed at a high level in the adult lung and kidney. Both isoforms 1 and 2 are expressed in the gut and liver.

The protein localises to the golgi apparatus membrane. It carries out the reaction an N-acetyl-alpha-neuraminyl-(2-&gt;3)-beta-D-galactosyl derivative + CMP-N-acetyl-beta-neuraminate = an N-acetyl-alpha-neuraminyl-(2-&gt;8)-N-acetyl-alpha-neuraminyl-(2-&gt;3)-beta-D-galactosyl derivative + CMP + H(+). It catalyses the reaction a ganglioside GM3 (d18:1(4E)) + CMP-N-acetyl-beta-neuraminate = a ganglioside GD3 (d18:1(4E)) + CMP + H(+). The enzyme catalyses a ganglioside GD3 (d18:1(4E)) + CMP-N-acetyl-beta-neuraminate = a ganglioside GT3 (d18:1(4E)) + CMP + H(+). The catalysed reaction is a ganglioside GD1a (d18:1(4E)) + CMP-N-acetyl-beta-neuraminate = a ganglioside GT1a (d18:1(4E)) + CMP + H(+). It carries out the reaction a ganglioside GT1b (d18:1(4E)) + CMP-N-acetyl-beta-neuraminate = a ganglioside GQ1b (d18:1(4E)) + CMP + H(+). It catalyses the reaction a ganglioside GM1b (d18:1(4E)) + CMP-N-acetyl-beta-neuraminate = a ganglioside GD1c (d18:1(4E)) + CMP + H(+). The enzyme catalyses a ganglioside GD3 + CMP-N-acetyl-beta-neuraminate = a ganglioside GT3 + CMP + H(+). The catalysed reaction is [alpha-N-acetylneuraminyl-(2-&gt;8)](n)-alpha-N-acetylneuraminyl-(2-&gt;8)-alpha-N-acetylneuraminyl-(2-&gt;3)-beta-D-galactosyl-(1-&gt;4)-beta-D-glucosyl-(1&lt;-&gt;1)-ceramide + CMP-N-acetyl-beta-neuraminate = [alpha-N-acetylneuraminyl-(2-&gt;8)](n+1)-alpha-N-acetylneuraminyl-(2-&gt;8)-alpha-N-acetylneuraminyl-(2-&gt;3)-beta-D-galactosyl-(1-&gt;4)-beta-D-glucosyl-(1&lt;-&gt;1)-ceramide + CMP + H(+). It functions in the pathway protein modification; protein glycosylation. Its pathway is lipid metabolism; sphingolipid metabolism. Its function is as follows. Catalyzes the addition of sialic acid in alpha 2,8-linkage to the sialic acid moiety of the ganglioside GM3 to form ganglioside GD3; gangliosides are a subfamily of complex glycosphingolipds that contain one or more residues of sialic acid. Glycosphingolipids are required for convergence extension movements during early development. Can catalyze the addition of a second alpha-2,8- sialic acid to GD3 to form GT3. Can use GM1b, GD1a and GT1b as acceptor substrates to synthesize GD1c, GT1a and GQ1b respectively. The polypeptide is Alpha-N-acetylneuraminide alpha-2,8-sialyltransferase (Xenopus laevis (African clawed frog)).